Consider the following 332-residue polypeptide: Ketol-acid reductoisomerase (NADP(+)) (332 aa).

The KARI N-terminal Rossmann domain maps to 2 to 182 (AKIYTDKDVS…GATRAGVIET (181 aa)). NADP(+) contacts are provided by residues 25-28 (YGSQ), Ser-53, and 83-86 (DMIQ). The active site involves His-108. Gly-134 is an NADP(+) binding site. A KARI C-terminal knotted domain is found at 183–328 (TFKEETETDL…RSLRDIILRG (146 aa)). Mg(2+) contacts are provided by Asp-191, Glu-195, Glu-227, and Glu-231. Ser-252 is a substrate binding site.

This sequence belongs to the ketol-acid reductoisomerase family. Mg(2+) serves as cofactor.

The enzyme catalyses (2R)-2,3-dihydroxy-3-methylbutanoate + NADP(+) = (2S)-2-acetolactate + NADPH + H(+). It carries out the reaction (2R,3R)-2,3-dihydroxy-3-methylpentanoate + NADP(+) = (S)-2-ethyl-2-hydroxy-3-oxobutanoate + NADPH + H(+). Its pathway is amino-acid biosynthesis; L-isoleucine biosynthesis; L-isoleucine from 2-oxobutanoate: step 2/4. The protein operates within amino-acid biosynthesis; L-valine biosynthesis; L-valine from pyruvate: step 2/4. In terms of biological role, involved in the biosynthesis of branched-chain amino acids (BCAA). Catalyzes an alkyl-migration followed by a ketol-acid reduction of (S)-2-acetolactate (S2AL) to yield (R)-2,3-dihydroxy-isovalerate. In the isomerase reaction, S2AL is rearranged via a Mg-dependent methyl migration to produce 3-hydroxy-3-methyl-2-ketobutyrate (HMKB). In the reductase reaction, this 2-ketoacid undergoes a metal-dependent reduction by NADPH to yield (R)-2,3-dihydroxy-isovalerate. The chain is Ketol-acid reductoisomerase (NADP(+)) from Sulfolobus acidocaldarius (strain ATCC 33909 / DSM 639 / JCM 8929 / NBRC 15157 / NCIMB 11770).